Consider the following 212-residue polypeptide: ATP-dependent dethiobiotin synthetase BioD (212 aa).

Residue 12–17 (DCGKTF) coordinates ATP. Thr16 serves as a coordination point for Mg(2+). Lys33 is a catalytic residue. Residue Ser37 coordinates substrate. Residues Asp50, 110–113 (EGAG), and 170–171 (NC) each bind ATP. Mg(2+) is bound by residues Asp50 and Glu110.

This sequence belongs to the dethiobiotin synthetase family. As to quaternary structure, homodimer. The cofactor is Mg(2+).

The protein resides in the cytoplasm. It carries out the reaction (7R,8S)-7,8-diammoniononanoate + CO2 + ATP = (4R,5S)-dethiobiotin + ADP + phosphate + 3 H(+). Its pathway is cofactor biosynthesis; biotin biosynthesis; biotin from 7,8-diaminononanoate: step 1/2. In terms of biological role, catalyzes a mechanistically unusual reaction, the ATP-dependent insertion of CO2 between the N7 and N8 nitrogen atoms of 7,8-diaminopelargonic acid (DAPA, also called 7,8-diammoniononanoate) to form a ureido ring. In Legionella pneumophila (strain Paris), this protein is ATP-dependent dethiobiotin synthetase BioD.